The chain runs to 371 residues: Cathepsin L1 (371 aa).

A signal peptide spans 1 to 48 (MNHLGVFETRFRPRTRHKSQRAQLIPEQITMRTAVLLPLLALLAVAQA). The propeptide at 49-153 (VSFADVVMEE…VTFISPAHVT (105 aa)) is activation peptide. The N-linked (GlcNAc...) asparagine glycan is linked to Asn127. 3 disulfides stabilise this stretch: Cys175–Cys218, Cys209–Cys251, and Cys310–Cys360. The active site involves Cys178. The active site involves His317. Residues 327 to 329 (DES) constitute a propeptide that is removed on maturation. Residue Asn338 is part of the active site.

Belongs to the peptidase C1 family. As to quaternary structure, dimer of a heavy and a light chain linked by disulfide bonds. In the embryo, predominantly expressed in the midgut. Also expressed in larval alimentary organs such as salivary gland and midgut including gastric caeca.

It is found in the lysosome. It carries out the reaction Specificity close to that of papain. As compared to cathepsin B, cathepsin L exhibits higher activity toward protein substrates, but has little activity on Z-Arg-Arg-NHMec, and no peptidyl-dipeptidase activity.. Functionally, important for the overall degradation of proteins in lysosomes. Essential for adult male and female fertility. May play a role in digestion. The sequence is that of Cathepsin L1 from Drosophila melanogaster (Fruit fly).